The primary structure comprises 209 residues: Small ribosomal subunit protein uS4 (209 aa).

In terms of domain architecture, S4 RNA-binding spans 98–161 (ARLDNVVYRM…RDLEVIKKAV (64 aa)).

This sequence belongs to the universal ribosomal protein uS4 family. In terms of assembly, part of the 30S ribosomal subunit. Contacts protein S5. The interaction surface between S4 and S5 is involved in control of translational fidelity.

In terms of biological role, one of the primary rRNA binding proteins, it binds directly to 16S rRNA where it nucleates assembly of the body of the 30S subunit. Functionally, with S5 and S12 plays an important role in translational accuracy. This Thermotoga petrophila (strain ATCC BAA-488 / DSM 13995 / JCM 10881 / RKU-1) protein is Small ribosomal subunit protein uS4.